Reading from the N-terminus, the 272-residue chain is Glutamate 5-kinase (272 aa).

Lys14 provides a ligand contact to ATP. Residues Ser54, Asp141, and Asn157 each coordinate substrate. ATP is bound by residues 177 to 178 (SD) and 219 to 225 (TGGMLSK).

Belongs to the glutamate 5-kinase family.

The protein resides in the cytoplasm. The catalysed reaction is L-glutamate + ATP = L-glutamyl 5-phosphate + ADP. The protein operates within amino-acid biosynthesis; L-proline biosynthesis; L-glutamate 5-semialdehyde from L-glutamate: step 1/2. Catalyzes the transfer of a phosphate group to glutamate to form L-glutamate 5-phosphate. In Streptococcus pyogenes serotype M28 (strain MGAS6180), this protein is Glutamate 5-kinase.